We begin with the raw amino-acid sequence, 746 residues long: Hyperosmolality-gated Ca2+ permeable channel 2.1 (746 aa).

A run of 10 helical transmembrane segments spans residues 3–23, 90–110, 144–164, 357–377, 405–425, 445–465, 492–512, 560–580, 601–621, and 623–643; these read ISAL…LLSL, MVIF…AFVL, LWVH…LLYF, IATL…VTFI, VITG…VPPL, ACIK…ILSG, AGFF…CEIM, VIAP…YLIY, IFHN…LGFF, and LKLS…TLLF. Positions 692 to 702 are enriched in polar residues; sequence LHSQKSSSKAE. Residues 692-723 are disordered; that stretch reads LHSQKSSSKAECSNPFKKQELPDPEKLKPEEG. The segment covering 708–723 has biased composition (basic and acidic residues); sequence KKQELPDPEKLKPEEG.

It belongs to the CSC1 (TC 1.A.17) family.

It is found in the membrane. Functionally, acts as an osmosensitive calcium-permeable cation channel. This chain is Hyperosmolality-gated Ca2+ permeable channel 2.1, found in Arabidopsis thaliana (Mouse-ear cress).